Here is an 88-residue protein sequence, read N- to C-terminus: Large ribosomal subunit protein bL27 (88 aa).

It belongs to the bacterial ribosomal protein bL27 family.

This is Large ribosomal subunit protein bL27 from Parabacteroides distasonis (strain ATCC 8503 / DSM 20701 / CIP 104284 / JCM 5825 / NCTC 11152).